Reading from the N-terminus, the 509-residue chain is Scavenger receptor class B member 1 (509 aa).

The Cytoplasmic portion of the chain corresponds to 1–11; the sequence is MGVSSRARWVA. A helical transmembrane segment spans residues 12–32; that stretch reads LGLGVLGLLCAALGVIMILMV. Residues 33–440 are Extracellular-facing; that stretch reads PSLIKQQVLK…YTQLVLMPQV (408 aa). Residues Asn102, Asn108, Asn116, Asn173, Asn212, Asn227, Asn255, Asn310, Asn330, and Asn383 are each glycosylated (N-linked (GlcNAc...) asparagine). Cys251 and Cys384 are disulfide-bonded. The helical transmembrane segment at 441 to 461 threads the bilayer; sequence LHYAQYVLLGLGGLLLLVPII. Over 462-509 the chain is Cytoplasmic; sequence YQLRSQEKCFLFWSGSKKGSQDKEAMQAYSESLMSPAAKGTVLQEAKL.

The protein belongs to the CD36 family. The C-terminal region binds to PDZK1. In terms of processing, N-glycosylated. Post-translationally, the six cysteines of the extracellular domain are all involved in intramolecular disulfide bonds.

The protein resides in the cell membrane. Its subcellular location is the membrane. It is found in the caveola. Functionally, receptor for different ligands such as phospholipids, cholesterol ester, lipoproteins, phosphatidylserine and apoptotic cells. Receptor for HDL, mediating selective uptake of cholesteryl ether and HDL-dependent cholesterol efflux. Also facilitates the flux of free and esterified cholesterol between the cell surface and apoB-containing lipoproteins and modified lipoproteins, although less efficiently than HDL. May be involved in the phagocytosis of apoptotic cells, via its phosphatidylserine binding activity. The chain is Scavenger receptor class B member 1 (Scarb1) from Rattus norvegicus (Rat).